A 427-amino-acid polypeptide reads, in one-letter code: Glutamate-1-semialdehyde 2,1-aminomutase (427 aa).

Lys-267 carries the N6-(pyridoxal phosphate)lysine modification.

This sequence belongs to the class-III pyridoxal-phosphate-dependent aminotransferase family. HemL subfamily. In terms of assembly, homodimer. Pyridoxal 5'-phosphate is required as a cofactor.

The protein localises to the cytoplasm. The enzyme catalyses (S)-4-amino-5-oxopentanoate = 5-aminolevulinate. The protein operates within porphyrin-containing compound metabolism; protoporphyrin-IX biosynthesis; 5-aminolevulinate from L-glutamyl-tRNA(Glu): step 2/2. This chain is Glutamate-1-semialdehyde 2,1-aminomutase, found in Geotalea daltonii (strain DSM 22248 / JCM 15807 / FRC-32) (Geobacter daltonii).